Here is a 30-residue protein sequence, read N- to C-terminus: Trypsin inhibitor 3 (30 aa).

Intrachain disulfides connect cysteine 4/cysteine 21, cysteine 11/cysteine 23, and cysteine 17/cysteine 29.

Belongs to the protease inhibitor I7 (squash-type serine protease inhibitor) family.

The protein localises to the secreted. Its function is as follows. Inhibits lysyl endopeptidase and trypsin. The protein is Trypsin inhibitor 3 of Cucumis melo var. conomon (Oriental pickling melon).